We begin with the raw amino-acid sequence, 74 residues long: ERTHTGEKPFECQECHKRFTRDHHLKTHMRLHTGERPYRCEHCDRQFVQVANLRRHLRVHTGERPYGCEHCSMK.

4 C2H2-type zinc fingers span residues 1 to 4 (ERTH), 10 to 32 (FECQ…MRLH), 38 to 60 (YRCE…LRVH), and 66 to 74 (YGCEHCSMK).

This sequence belongs to the krueppel C2H2-type zinc-finger protein family.

It localises to the nucleus. Its function is as follows. Krueppel is a gap class segmentation protein. This is Protein krueppel (Kr) from Tribolium castaneum (Red flour beetle).